The primary structure comprises 354 residues: NADH-quinone oxidoreductase subunit H 2 (354 aa).

A run of 8 helical transmembrane segments spans residues 4-24 (IALF…VLLT), 81-101 (ILAP…VPFG), 130-150 (IGLL…ALAG), 170-190 (VSYE…SGSF), 201-221 (GGFW…FIYL), 269-289 (VACI…PGFL), 296-316 (LVPV…YIWV), and 333-353 (WKFL…FVAL).

Belongs to the complex I subunit 1 family. As to quaternary structure, NDH-1 is composed of 14 different subunits. Subunits NuoA, H, J, K, L, M, N constitute the membrane sector of the complex.

The protein localises to the cell inner membrane. It catalyses the reaction a quinone + NADH + 5 H(+)(in) = a quinol + NAD(+) + 4 H(+)(out). In terms of biological role, NDH-1 shuttles electrons from NADH, via FMN and iron-sulfur (Fe-S) centers, to quinones in the respiratory chain. The immediate electron acceptor for the enzyme in this species is believed to be ubiquinone. Couples the redox reaction to proton translocation (for every two electrons transferred, four hydrogen ions are translocated across the cytoplasmic membrane), and thus conserves the redox energy in a proton gradient. This subunit may bind ubiquinone. In Koribacter versatilis (strain Ellin345), this protein is NADH-quinone oxidoreductase subunit H 2.